Here is a 272-residue protein sequence, read N- to C-terminus: HMP-PP phosphatase (272 aa).

Asp8 serves as the catalytic Nucleophile. Mg(2+) contacts are provided by Asp8, Asp10, and Asp212.

Belongs to the HAD-like hydrolase superfamily. Cof family. Mg(2+) serves as cofactor.

It carries out the reaction 4-amino-2-methyl-5-(diphosphooxymethyl)pyrimidine + H2O = 4-amino-2-methyl-5-(phosphooxymethyl)pyrimidine + phosphate + H(+). Catalyzes the hydrolysis of 4-amino-2-methyl-5-hydroxymethylpyrimidine pyrophosphate (HMP-PP) to 4-amino-2-methyl-5-hydroxymethylpyrimidine phosphate (HMP-P). This chain is HMP-PP phosphatase, found in Shigella flexneri serotype 5b (strain 8401).